Reading from the N-terminus, the 1638-residue chain is Chromatin-remodeling ATPase INO80 (1638 aa).

The segment at 41-93 (SLRKPLSSDEETDDEHVVKREHDVQDSDDSSTVGVVRMKQSSKRKSRLLASKE) is disordered. Residues serine 47 and serine 48 each carry the phosphoserine modification. Position 52 is a phosphothreonine (threonine 52). The span at 55–65 (EHVVKREHDVQ) shows a compositional bias: basic and acidic residues. A phosphoserine mark is found at serine 67 and serine 70. Residues 136 to 161 (VQQLLREHVREQRQRKNYYKKAANAQ) are a coiled coil. The interval 201–259 (RLAEAQAGPKPPKQRRRGRKKRDNMGSPESGEVPPSELGKYTFGDTLPNNEDDDEDGGE) is disordered. The span at 212–222 (PKQRRRGRKKR) shows a compositional bias: basic residues. 2 positions are modified to phosphoserine: serine 227 and serine 230. Positions 250 to 259 (NEDDDEDGGE) are enriched in acidic residues. The DBINO domain occupies 313–438 (IWQIMSKKES…AHFMSKKLGQ (126 aa)). The disordered stretch occupies residues 499-528 (KEKEEEEQAQESVEDIKPEPRPEMKDLPQP). Acidic residues predominate over residues 502 to 511 (EEEEQAQESV). The span at 512–526 (EDIKPEPRPEMKDLP) shows a compositional bias: basic and acidic residues. Residues 547–718 (ANIYDQGISG…WALLHFIMPT (172 aa)) form the Helicase ATP-binding domain. 560–567 (DEMGLGKT) is a binding site for ATP. Residues 1160–1315 (VLDNLLTRLK…GGNFKPDTLK (156 aa)) form the Helicase C-terminal domain. Disordered regions lie at residues 1335 to 1364 (QEAKLQSSSPIPAATQSERKRRHPQKDVNM) and 1463 to 1638 (FLDD…VGPE). A compositionally biased stretch (polar residues) spans 1338–1350 (KLQSSSPIPAATQ). A compositionally biased stretch (basic residues) spans 1473 to 1495 (MRRRHHPRGTRRGRPRGSTRRGG). Low complexity-rich tracts occupy residues 1505–1534 (TPTQAATPAVPATASQAAAAGTGAAAGTSS) and 1618–1627 (SPATSRAPSP).

It belongs to the SNF2/RAD54 helicase family. Component of the chromatin remodeling Ino80 complex.

Its subcellular location is the nucleus. The enzyme catalyses ATP + H2O = ADP + phosphate + H(+). ATPase component of the chromatin remodeling INO80 complex which is involved in transcriptional regulation, DNA replication and DNA repair. Binds DNA. As part of the INO80 complex, remodels chromatin by shifting nucleosomes. The protein is Chromatin-remodeling ATPase INO80 of Drosophila melanogaster (Fruit fly).